The chain runs to 244 residues: Ubiquinone/menaquinone biosynthesis C-methyltransferase UbiE (244 aa).

S-adenosyl-L-methionine-binding positions include threonine 70, aspartate 91, and 117-118 (DA).

Belongs to the class I-like SAM-binding methyltransferase superfamily. MenG/UbiE family.

It catalyses the reaction a 2-demethylmenaquinol + S-adenosyl-L-methionine = a menaquinol + S-adenosyl-L-homocysteine + H(+). The enzyme catalyses a 2-methoxy-6-(all-trans-polyprenyl)benzene-1,4-diol + S-adenosyl-L-methionine = a 5-methoxy-2-methyl-3-(all-trans-polyprenyl)benzene-1,4-diol + S-adenosyl-L-homocysteine + H(+). It participates in quinol/quinone metabolism; menaquinone biosynthesis; menaquinol from 1,4-dihydroxy-2-naphthoate: step 2/2. Its pathway is cofactor biosynthesis; ubiquinone biosynthesis. In terms of biological role, methyltransferase required for the conversion of demethylmenaquinol (DMKH2) to menaquinol (MKH2) and the conversion of 2-polyprenyl-6-methoxy-1,4-benzoquinol (DDMQH2) to 2-polyprenyl-3-methyl-6-methoxy-1,4-benzoquinol (DMQH2). The protein is Ubiquinone/menaquinone biosynthesis C-methyltransferase UbiE of Nitrosospira multiformis (strain ATCC 25196 / NCIMB 11849 / C 71).